Here is a 79-residue protein sequence, read N- to C-terminus: UPF0180 protein Bcer98_1118 (79 aa).

It belongs to the UPF0180 family.

This is UPF0180 protein Bcer98_1118 from Bacillus cytotoxicus (strain DSM 22905 / CIP 110041 / 391-98 / NVH 391-98).